The primary structure comprises 949 residues: Bifunctional glutamine synthetase adenylyltransferase/adenylyl-removing enzyme (949 aa).

Residues 1 to 450 (MQNQGNKVLS…HFNATVGGTD (450 aa)) are adenylyl removase. The adenylyl transferase stretch occupies residues 455–949 (NDHWTALFWN…IEIYNEILAI (495 aa)).

Belongs to the GlnE family. It depends on Mg(2+) as a cofactor.

The catalysed reaction is [glutamine synthetase]-O(4)-(5'-adenylyl)-L-tyrosine + phosphate = [glutamine synthetase]-L-tyrosine + ADP. It catalyses the reaction [glutamine synthetase]-L-tyrosine + ATP = [glutamine synthetase]-O(4)-(5'-adenylyl)-L-tyrosine + diphosphate. In terms of biological role, involved in the regulation of glutamine synthetase GlnA, a key enzyme in the process to assimilate ammonia. When cellular nitrogen levels are high, the C-terminal adenylyl transferase (AT) inactivates GlnA by covalent transfer of an adenylyl group from ATP to specific tyrosine residue of GlnA, thus reducing its activity. Conversely, when nitrogen levels are low, the N-terminal adenylyl removase (AR) activates GlnA by removing the adenylyl group by phosphorolysis, increasing its activity. The regulatory region of GlnE binds the signal transduction protein PII (GlnB) which indicates the nitrogen status of the cell. The polypeptide is Bifunctional glutamine synthetase adenylyltransferase/adenylyl-removing enzyme (Shewanella frigidimarina (strain NCIMB 400)).